The following is a 436-amino-acid chain: UPF0597 protein YhaM (436 aa).

This sequence belongs to the UPF0597 family.

The sequence is that of UPF0597 protein YhaM from Salmonella paratyphi A (strain ATCC 9150 / SARB42).